The chain runs to 367 residues: Glutamate 5-kinase (367 aa).

Lys10 provides a ligand contact to ATP. Substrate is bound by residues Ser50, Asp137, and Asn149. ATP is bound by residues Thr169–Asp170 and Thr211–Lys217. In terms of domain architecture, PUA spans Ala275–Glu353.

The protein belongs to the glutamate 5-kinase family.

Its subcellular location is the cytoplasm. It carries out the reaction L-glutamate + ATP = L-glutamyl 5-phosphate + ADP. It participates in amino-acid biosynthesis; L-proline biosynthesis; L-glutamate 5-semialdehyde from L-glutamate: step 1/2. Catalyzes the transfer of a phosphate group to glutamate to form L-glutamate 5-phosphate. This is Glutamate 5-kinase from Pectobacterium atrosepticum (strain SCRI 1043 / ATCC BAA-672) (Erwinia carotovora subsp. atroseptica).